Here is a 292-residue protein sequence, read N- to C-terminus: Phosphatidylglycerol--prolipoprotein diacylglyceryl transferase (292 aa).

Helical transmembrane passes span 24–44 (ISVHWYGIMYVSAMLIALLIA), 65–85 (FFIWVEIGVILGGRIGYVLIY), 110–130 (GISGFSYHGAMAGFVLAAIIF), and 136–156 (QSFWIFMDLSAISIPLGYVFG). Arg157 is a binding site for a 1,2-diacyl-sn-glycero-3-phospho-(1'-sn-glycerol). 3 helical membrane passes run 192 to 212 (SQLFEAFAEGIIVFILLICLL), 219 to 239 (GTLLVAYGVFYALARFVCEYF), and 256 to 276 (GQILSLVMLVISIFLGLFVFV).

This sequence belongs to the Lgt family.

Its subcellular location is the cell inner membrane. The catalysed reaction is L-cysteinyl-[prolipoprotein] + a 1,2-diacyl-sn-glycero-3-phospho-(1'-sn-glycerol) = an S-1,2-diacyl-sn-glyceryl-L-cysteinyl-[prolipoprotein] + sn-glycerol 1-phosphate + H(+). It functions in the pathway protein modification; lipoprotein biosynthesis (diacylglyceryl transfer). In terms of biological role, catalyzes the transfer of the diacylglyceryl group from phosphatidylglycerol to the sulfhydryl group of the N-terminal cysteine of a prolipoprotein, the first step in the formation of mature lipoproteins. This Helicobacter hepaticus (strain ATCC 51449 / 3B1) protein is Phosphatidylglycerol--prolipoprotein diacylglyceryl transferase.